A 399-amino-acid chain; its full sequence is Elongation factor Tu (399 aa).

The region spanning 10–209 (KPHVNIGTIG…KVDEYIPTPV (200 aa)) is the tr-type G domain. The segment at 19 to 26 (GHVDHGKT) is G1. 19 to 26 (GHVDHGKT) provides a ligand contact to GTP. T26 lines the Mg(2+) pocket. The tract at residues 60-64 (GITIA) is G2. A G3 region spans residues 81-84 (DCPG). GTP contacts are provided by residues 81-85 (DCPGH) and 136-139 (NKAD). The tract at residues 136 to 139 (NKAD) is G4. The interval 174–176 (SAL) is G5.

Belongs to the TRAFAC class translation factor GTPase superfamily. Classic translation factor GTPase family. EF-Tu/EF-1A subfamily. As to quaternary structure, monomer.

The protein resides in the cytoplasm. It carries out the reaction GTP + H2O = GDP + phosphate + H(+). GTP hydrolase that promotes the GTP-dependent binding of aminoacyl-tRNA to the A-site of ribosomes during protein biosynthesis. The polypeptide is Elongation factor Tu (Campylobacter curvus (strain 525.92)).